We begin with the raw amino-acid sequence, 142 residues long: MQLTSFTDYGLRALIYMASLPEGKMTSITEVTQVYGVSRNHMVKIINQLSHMGFVEAIRGKNGGIRLGKPAADIIVGEVVRALEPLSLVNCSAEFCHITPACRLKLVLNQAIEQFLKELDRHTLAELVENNSPLYKLLLEDV.

The HTH rrf2-type domain maps to glutamine 2–glutamate 129. Positions isoleucine 28 to histidine 51 form a DNA-binding region, H-T-H motif. [2Fe-2S] cluster-binding residues include cysteine 91, cysteine 96, and cysteine 102.

[2Fe-2S] cluster is required as a cofactor.

In terms of biological role, nitric oxide-sensitive repressor of genes involved in protecting the cell against nitrosative stress. May require iron for activity. The protein is HTH-type transcriptional repressor NsrR of Proteus mirabilis (strain HI4320).